The sequence spans 341 residues: Radial spoke head 14 homolog (341 aa).

ARM repeat units lie at residues 16–55 (PTKA…DLMH), 57–96 (PEYV…IMAT), 99–138 (VGRV…LAQL), 139–178 (PKGA…LCLQ), 180–217 (DATE…AISI), 219–258 (LDGK…HATV), 260–300 (TEGK…MLAE), and 302–339 (PEGR…VIEW).

It belongs to the flagellar radial spoke RSP14 family. As to quaternary structure, component of the axonemal radial spoke complex 1 (RS1), at least composed of spoke head proteins RSPH1, RSPH3, RSPH9 and the cilia-specific component RSPH4A or sperm-specific component RSPH6A, spoke stalk proteins RSPH14, DNAJB13, DYDC1, ROPN1L and NME5, and the anchor protein IQUB.

The protein resides in the cytoplasm. It is found in the cytoskeleton. Its subcellular location is the flagellum axoneme. In terms of biological role, functions as part of axonemal radial spoke complexes that play an important part in the motility of sperm and cilia. The polypeptide is Radial spoke head 14 homolog (Mus musculus (Mouse)).